We begin with the raw amino-acid sequence, 180 residues long: ADP-ribosylation factor 4 (180 aa).

Glycine 2 carries the N-myristoyl glycine lipid modification. GTP contacts are provided by residues 24–31, 67–71, and 126–129; these read GLDAAGKT, DVGGQ, and NKQD. Serine 147 carries the post-translational modification Phosphoserine.

It belongs to the small GTPase superfamily. Arf family. Forms a complex containing RAB11A, ASAP1, RAB3IP, RAP11FIP3 and ARF4; the complex promotes preciliary trafficking; the complex binds to RHO in photoreceptor cells and promotes RHO ciliary transport.

Its subcellular location is the golgi apparatus. It localises to the membrane. In terms of biological role, GTP-binding protein that functions as an allosteric activator of the cholera toxin catalytic subunit, an ADP-ribosyltransferase. Involved in protein trafficking; may modulate vesicle budding and uncoating within the Golgi apparatus. Part of the ciliary targeting complex containing Rab11, ASAP1, Rabin8/RAB3IP, RAB11FIP3 and ARF4, which direct preciliary vesicle trafficking to mother centriole and ciliogenesis initiation. The polypeptide is ADP-ribosylation factor 4 (ARF4) (Bos taurus (Bovine)).